Reading from the N-terminus, the 274-residue chain is Protein STAY-GREEN, chloroplastic (274 aa).

The transit peptide at 1–48 (MAAATSTMSLIPPITQQQRWHAADSLVVLASRRHDSRRRRRCRYVVPR) directs the protein to the chloroplast.

It belongs to the staygreen family.

The protein resides in the plastid. The protein localises to the chloroplast. Functionally, involved in the disassembling mechanism of the intact light-harvesting complex of photosystem II (LHCPII) in the thylakoid membranes. Required to trigger chlorophyll degradation during natural and dark-induced leaf senescence. The polypeptide is Protein STAY-GREEN, chloroplastic (SGR) (Oryza sativa subsp. indica (Rice)).